A 1007-amino-acid chain; its full sequence is Glutamate receptor ionotropic, delta-2 (1007 aa).

Residues 1-23 (MEVFPLLFFLSFWWSRTWDLATS) form the signal peptide. The interval 24–345 (DSIIHIGAIF…NAFHKKLEDR (322 aa)) is interaction with CBLN1 homotrimer. At 24–566 (DSIIHIGAIF…DMFACLAPFD (543 aa)) the chain is on the extracellular side. Intrachain disulfides connect Cys-83-Cys-355, Cys-99-Cys-131, and Cys-298-Cys-310. N-linked (GlcNAc...) asparagine glycosylation is present at Asn-293. The N-linked (GlcNAc...) asparagine glycan is linked to Asn-426. A helical membrane pass occupies residues 567 to 587 (LSLWACIAGTVLLVGLLVYLL). At 588–635 (NWLNPPRLQMGSMTSTTLYNSMWFVYGSFVQQGGEVPYTTLATRMMMG) the chain is on the cytoplasmic side. A helical transmembrane segment spans residues 636-656 (AWWLFALIVISSYTANLAAFL). Over 657 to 830 (TITRIESSIQ…QKGGALDIKS (174 aa)) the chain is Extracellular. Residues Asn-713 and Asn-716 are each glycosylated (N-linked (GlcNAc...) asparagine). The helical transmembrane segment at 831–851 (LAGVFCILAAGIVLSCLIAVL) threads the bilayer. Over 852–1007 (ETWWSRRKGS…GNDPDRGTSI (156 aa)) the chain is Cytoplasmic. A Phosphoserine modification is found at Ser-883. The residue at position 886 (Thr-886) is a Phosphothreonine. Residue Ser-890 is modified to Phosphoserine. The interval 921-991 (DFRNTHITTT…MSSIPYQPTP (71 aa)) is interaction with AP4M1. Residues 1005–1007 (TSI) carry the PDZ-binding motif. The residue at position 1006 (Ser-1006) is a Phosphoserine.

This sequence belongs to the glutamate-gated ion channel (TC 1.A.10.1) family. GRID2 subfamily. As to quaternary structure, tetramer; dimer of dimers. Interacts with AP4M1. Interacts with EML2. Interacts with MAGI2 (via PDZ domains). Interacts with BECN1, GOPC, GRID2IP, SHANK1 and SHANK2. Interacts with CBLN2, but not with CBLN4. Interacts with CBLN1 (via C1q domain); the interaction is CBLN1-NRX1 complex formation-dependent; CBLN1-binding is calcium-independent; CBLN1 hexamers anchor GRID2 N-terminal domain dimers to monomeric NRXN1 isoform beta; promotes synaptogenesis and mediates the D-Serine-dependent long term depression signals and AMPA receptor endocytosis. As to expression, expressed at high levels in the cerebellar Purkinje cell layer, almost absent in the forebrain.

Its subcellular location is the postsynaptic cell membrane. It carries out the reaction Ca(2+)(in) = Ca(2+)(out). The enzyme catalyses Na(+)(in) = Na(+)(out). In terms of biological role, member of the ionotropic glutamate receptor family, which plays a crucial role in synaptic organization and signal transduction in the central nervous system. Although it shares structural features with ionotropic glutamate receptors, does not bind glutamate as a primary ligand. Promotes synaptogenesis and mediates the D-Serine-dependent long term depression signals and AMPA receptor endocytosis of cerebellar parallel fiber-Purkinje cell (PF-PC) synapses through the NRX1B-CBLN1-GRID2 triad complex. In the presence of neurexins and cerebellins, forms cation-selective channels that are proposed to be gated by glycine and D-serine. However, recent research disputes this ligand-gated cation channel activity. Cation-selective ion channel activity can be triggered by GRM1 in Purkinje cells. The protein is Glutamate receptor ionotropic, delta-2 (Grid2) of Rattus norvegicus (Rat).